Consider the following 577-residue polypeptide: Cryptochrome DASH, chloroplastic/mitochondrial (577 aa).

A chloroplast and mitochondrion-targeting transit peptide spans 1-53 (MIKQPFLLTKFTPFSSKSKHTLFTFHCNFSIKMASLTARTTPTVQNVPGLTPE). The Photolyase/cryptochrome alpha/beta domain maps to 78-219 (GVAIVWFRND…GNDPGSGNTT (142 aa)). A disordered region spans residues 550-577 (TKKTGDSKTAFSSRRGRPEDNRRKRHGY).

Belongs to the DNA photolyase class-1 family. FAD is required as a cofactor. Requires (6R)-5,10-methylene-5,6,7,8-tetrahydrofolate as cofactor. As to expression, expressed in the endosperm and embryo 96 hours after seed imbibition. In the embryo, detected in the root meristem, the root cap, the shoot apical meristem and the epidermis of cotyledons. In adult plants, detcted in roots, the whole leaf lamina, the stem and in glandular trichomes.

The protein localises to the plastid. The protein resides in the chloroplast. It is found in the mitochondrion. In terms of biological role, may have a photoreceptor function and might bind ss- and ds-DNA in a sequence non-specific manner. Lacks photolyase activity. Has a potential role in detecting the dawn and dusk transitions and, consequently, in circadian input pathways. The protein is Cryptochrome DASH, chloroplastic/mitochondrial of Solanum lycopersicum (Tomato).